Consider the following 279-residue polypeptide: Bifunctional protein FolD (279 aa).

NADP(+) contacts are provided by residues 164–166, Ser189, and Ile230; that span reads GRS.

This sequence belongs to the tetrahydrofolate dehydrogenase/cyclohydrolase family. In terms of assembly, homodimer.

It catalyses the reaction (6R)-5,10-methylene-5,6,7,8-tetrahydrofolate + NADP(+) = (6R)-5,10-methenyltetrahydrofolate + NADPH. The enzyme catalyses (6R)-5,10-methenyltetrahydrofolate + H2O = (6R)-10-formyltetrahydrofolate + H(+). It functions in the pathway one-carbon metabolism; tetrahydrofolate interconversion. In terms of biological role, catalyzes the oxidation of 5,10-methylenetetrahydrofolate to 5,10-methenyltetrahydrofolate and then the hydrolysis of 5,10-methenyltetrahydrofolate to 10-formyltetrahydrofolate. This Agathobacter rectalis (strain ATCC 33656 / DSM 3377 / JCM 17463 / KCTC 5835 / VPI 0990) (Eubacterium rectale) protein is Bifunctional protein FolD.